We begin with the raw amino-acid sequence, 507 residues long: ATP synthase subunit alpha, plastid (507 aa).

G170–T177 serves as a coordination point for ATP.

It belongs to the ATPase alpha/beta chains family. As to quaternary structure, F-type ATPases have 2 components, CF(1) - the catalytic core - and CF(0) - the membrane proton channel. CF(1) has five subunits: alpha(3), beta(3), gamma(1), delta(1), epsilon(1). CF(0) has four main subunits: a, b, b' and c.

The protein localises to the plastid membrane. The enzyme catalyses ATP + H2O + 4 H(+)(in) = ADP + phosphate + 5 H(+)(out). In terms of biological role, produces ATP from ADP in the presence of a proton gradient across the membrane. The alpha chain is a regulatory subunit. In Cuscuta gronovii (Common dodder), this protein is ATP synthase subunit alpha, plastid.